Here is a 614-residue protein sequence, read N- to C-terminus: Vitamin B12 transporter BtuB (614 aa).

A signal peptide spans 1 to 20; the sequence is MIKKASLLTACSVTAFSAWA. The TonB box motif lies at 26–33; it reads DTLVVTAN. The region spanning 38-152 is the TBDR plug domain; it reads PRSTVLAPTT…IGGVVNIITT (115 aa). Cyanocob(III)alamin-binding positions include Leu83, Ser85, Asn92, and 110 to 111; that span reads VS. Positions 155 to 614 constitute a TBDR beta-barrel domain; the sequence is HPGTEISAGW…EYTLXGSYTF (460 aa). 3 beta stranded membrane-spanning segments follow: residues 158 to 165, 169 to 178, and 184 to 195; these read TEISAGWG, YQNYDVSTQQ, and TRVTLLGDYAHT. Ca(2+) is bound by residues Asp199, Gln211, Asp213, and Asp215. Beta stranded transmembrane passes span 217-227 and 232-248; these read FLSKTLYGALE and DAWS…NRTN. 2 residues coordinate Ca(2+): Tyr249 and Asp250. Ala251 lines the cyanocob(III)alamin pocket. A Ca(2+)-binding site is contributed by Asp261. 14 consecutive transmembrane segments (beta stranded) span residues 263–277, 279–296, 309–325, 328–337, 353–369, 371–381, 385–400, 403–417, 434–443, 449–458, 473–490, 494–509, 517–529, and 535–550; these read RKLY…LRYN, ELIK…KDYN, TLDE…NNII, HGNIGAGVDW, YDQR…QQVG, FTFEGAGRSDD, FGRH…WEFI, YRFI…KAPN, KSKQWEGAFE, VNWRISGYRN, YYNE…TANF, PLTH…ARNA, RRAK…QLDW, and DWGI…YDKD. A cyanocob(III)alamin-binding site is contributed by Thr309. Residue Arg517 coordinates cyanocob(III)alamin. A cyanocob(III)alamin-binding site is contributed by Tyr551. 3 beta stranded membrane passes run 558-572, 585-596, and 602-614; these read TVKM…LAVA, IANLFDKDYETV, and AGRE…SYTF. Positions 597 to 614 match the TonB C-terminal box motif; sequence YGYQTAGREYTLXGSYTF.

This sequence belongs to the TonB-dependent receptor family. BtuB (TC 1.B.14.3.1) subfamily.

It is found in the cell outer membrane. Involved in the active translocation of vitamin B12 (cyanocobalamin) across the outer membrane to the periplasmic space. It derives its energy for transport by interacting with the trans-periplasmic membrane protein TonB. This is Vitamin B12 transporter BtuB from Escherichia coli O6:H1 (strain CFT073 / ATCC 700928 / UPEC).